A 116-amino-acid polypeptide reads, in one-letter code: MNVTNAMPNPLIFTDIAAGKVKELIEEEGNDKLMLRVFITGGGCSGFQYGFTFDETSHEGDTRVKNGGVTLLIDPTSYQYLVGAEIDYTEGLEGAQFVIRNPNAETTCGCGSSFSP.

Iron-sulfur cluster contacts are provided by Cys-44, Cys-108, and Cys-110.

This sequence belongs to the HesB/IscA family. Homodimer. Requires iron-sulfur cluster as cofactor.

Functionally, required for insertion of 4Fe-4S clusters for at least IspG. The polypeptide is Iron-sulfur cluster insertion protein ErpA (Nitrosococcus oceani (strain ATCC 19707 / BCRC 17464 / JCM 30415 / NCIMB 11848 / C-107)).